We begin with the raw amino-acid sequence, 69 residues long: Conotoxin Gla-TxXI (69 aa).

An N-terminal signal peptide occupies residues 1–25 (MVRVTSVGCFLLVIVSLNLVVLTNA). 4 cysteine pairs are disulfide-bonded: Cys26–Cys40, Cys33–Cys45, Cys39–Cys49, and Cys44–Cys53. Glu29 carries the post-translational modification 4-carboxyglutamate. A Proline amide modification is found at Pro56. The propeptide occupies 60–69 (AKLLEFFRQR).

In terms of processing, contains 4 disulfide bonds. In terms of tissue distribution, expressed by the venom duct.

The protein localises to the secreted. This is Conotoxin Gla-TxXI from Conus textile (Cloth-of-gold cone).